The primary structure comprises 76 residues: Putative membrane protein insertion efficiency factor (76 aa).

Belongs to the UPF0161 family.

The protein localises to the cell inner membrane. Functionally, could be involved in insertion of integral membrane proteins into the membrane. This Porphyromonas gingivalis (strain ATCC 33277 / DSM 20709 / CIP 103683 / JCM 12257 / NCTC 11834 / 2561) protein is Putative membrane protein insertion efficiency factor.